We begin with the raw amino-acid sequence, 193 residues long: 7-methyl-GTP pyrophosphatase (193 aa).

D68 (proton acceptor) is an active-site residue.

This sequence belongs to the Maf family. YceF subfamily. A divalent metal cation serves as cofactor.

It localises to the cytoplasm. It carries out the reaction N(7)-methyl-GTP + H2O = N(7)-methyl-GMP + diphosphate + H(+). In terms of biological role, nucleoside triphosphate pyrophosphatase that hydrolyzes 7-methyl-GTP (m(7)GTP). May have a dual role in cell division arrest and in preventing the incorporation of modified nucleotides into cellular nucleic acids. This Chromobacterium violaceum (strain ATCC 12472 / DSM 30191 / JCM 1249 / CCUG 213 / NBRC 12614 / NCIMB 9131 / NCTC 9757 / MK) protein is 7-methyl-GTP pyrophosphatase.